Reading from the N-terminus, the 556-residue chain is (-)-alpha-pinene synthase (556 aa).

Mg(2+)-binding residues include Asp-309, Asp-313, Asp-453, and Glu-461. The short motif at Asp-309–Asp-313 is the DDXXD motif element.

The protein belongs to the terpene synthase family. Tpsa subfamily. Requires Mg(2+) as cofactor. The cofactor is Mn(2+). As to expression, expressed in ripe fruits and roots. Not detected in vegetative tissues.

The protein localises to the cytoplasm. It is found in the cytosol. The catalysed reaction is (2E)-geranyl diphosphate = (1S,5S)-alpha-pinene + diphosphate. It participates in secondary metabolite biosynthesis; terpenoid biosynthesis. Its function is as follows. Monoterpene synthase catalyzing the production of (-)-alpha-pinene, beta-phellandrene and beta-myrcene as the major products. Unable to use farnesyl diphosphate as substrate. Exclusively expressed in the fruit of wild strawberries. Not detected in cultivated varieties. This is (-)-alpha-pinene synthase from Fragaria vesca (Woodland strawberry).